The primary structure comprises 278 residues: Undecaprenyl-diphosphatase 1 (278 aa).

Transmembrane regions (helical) follow at residues 85–105 (LNVIIATIPAIVLGLLFEKTI), 108–128 (ALFSPVPVAFALVAGGVVILW), 188–208 (VATEFSFFLAIPIIFGATAYE), 218–238 (VDALGTFALGFVAAFVSAFAC), and 254–274 (FAWYRIGFGLLILLVGYSGAL).

This sequence belongs to the UppP family.

The protein resides in the cell inner membrane. The enzyme catalyses di-trans,octa-cis-undecaprenyl diphosphate + H2O = di-trans,octa-cis-undecaprenyl phosphate + phosphate + H(+). Functionally, catalyzes the dephosphorylation of undecaprenyl diphosphate (UPP). Confers resistance to bacitracin. This is Undecaprenyl-diphosphatase 1 from Paraburkholderia xenovorans (strain LB400).